A 502-amino-acid chain; its full sequence is Arginine-specific demethylase JMJ22 (502 aa).

A disordered region spans residues 15–45; it reads KSKSKRLKLHQHEPESLFPEKEVEEEDEDEG. Over residues 24–35 the composition is skewed to basic and acidic residues; the sequence is HQHEPESLFPEK. Residues 80 to 126 form the F-box domain; that stretch reads LGNLQILSDELVLDILGLLGANHLGVLATVTKSFYIFANHEPLWRNL. Residues 279 to 439 enclose the JmjC domain; it reads EKVPVLDSEY…NVLEFLKKPN (161 aa). Residues His324, Asp326, and His407 each coordinate Fe cation.

Belongs to the JARID1 histone demethylase family. Requires Fe(2+) as cofactor. Expressed in inflorescences, roots and siliques, and, at low levels, in leaves and stems.

The protein resides in the nucleus. The enzyme catalyses N(omega),N(omega)-dimethyl-L-arginyl-[protein] + 2-oxoglutarate + O2 = N(omega)-methyl-L-arginyl-[protein] + formaldehyde + succinate + CO2. Functionally, histone demethylase that demethylates 'Arg-3' (H4R3me) of histone H4 with a specific activity for H4R3me2. Involved in the positive regulation of gene expression. Together with JMJ20, positively regulates seed germination by promoting the removal of repressive histone arginine methylations (e.g. H4R3me2) at GA3ox1 and GA3ox2 to trigger gibberellic acid (GA) biosynthesis. The protein is Arginine-specific demethylase JMJ22 of Arabidopsis thaliana (Mouse-ear cress).